A 352-amino-acid polypeptide reads, in one-letter code: Phosphoribosylformylglycinamidine cyclo-ligase (352 aa).

It belongs to the AIR synthase family.

It localises to the cytoplasm. The enzyme catalyses 2-formamido-N(1)-(5-O-phospho-beta-D-ribosyl)acetamidine + ATP = 5-amino-1-(5-phospho-beta-D-ribosyl)imidazole + ADP + phosphate + H(+). It functions in the pathway purine metabolism; IMP biosynthesis via de novo pathway; 5-amino-1-(5-phospho-D-ribosyl)imidazole from N(2)-formyl-N(1)-(5-phospho-D-ribosyl)glycinamide: step 2/2. This is Phosphoribosylformylglycinamidine cyclo-ligase from Stenotrophomonas maltophilia (strain K279a).